The following is a 317-amino-acid chain: NAD-dependent protein deacetylase Sirt6 (317 aa).

Residues 27–273 (DEVVAEKCQE…SKVCKLLGVE (247 aa)) form the Deacetylase sirtuin-type domain. Ala-53, Thr-57, Phe-64, Arg-65, Trp-71, Gln-113, and His-133 together coordinate NAD(+). His-133 serves as the catalytic Proton acceptor. Zn(2+) contacts are provided by Cys-141, Cys-144, Cys-166, and Cys-177. The NAD(+) site is built by Gly-215, Asn-241, Gln-243, and Val-259.

It belongs to the sirtuin family. Class IV subfamily. Zn(2+) is required as a cofactor. Widely expressed.

It is found in the nucleus. It localises to the chromosome. It catalyses the reaction N(6)-acetyl-L-lysyl-[protein] + NAD(+) + H2O = 2''-O-acetyl-ADP-D-ribose + nicotinamide + L-lysyl-[protein]. Its function is as follows. NAD-dependent histone deacylase that acts as a regulator of life span. In Drosophila melanogaster (Fruit fly), this protein is NAD-dependent protein deacetylase Sirt6.